A 192-amino-acid polypeptide reads, in one-letter code: Shikimate kinase (192 aa).

Residue 32 to 37 participates in ATP binding; sequence GAGKSA. S36 is a Mg(2+) binding site. Residues D54, R78, and G100 each coordinate substrate. Residue R138 participates in ATP binding. Substrate is bound at residue R157.

The protein belongs to the shikimate kinase family. Monomer. It depends on Mg(2+) as a cofactor.

The protein resides in the cytoplasm. The enzyme catalyses shikimate + ATP = 3-phosphoshikimate + ADP + H(+). The protein operates within metabolic intermediate biosynthesis; chorismate biosynthesis; chorismate from D-erythrose 4-phosphate and phosphoenolpyruvate: step 5/7. Functionally, catalyzes the specific phosphorylation of the 3-hydroxyl group of shikimic acid using ATP as a cosubstrate. In Rhizobium meliloti (strain 1021) (Ensifer meliloti), this protein is Shikimate kinase.